Reading from the N-terminus, the 293-residue chain is Aminodeoxychorismate lyase (293 aa).

The residue at position 146 (Lys-146) is an N6-(pyridoxal phosphate)lysine.

The protein belongs to the class-IV pyridoxal-phosphate-dependent aminotransferase family. In terms of assembly, homodimer. Pyridoxal 5'-phosphate is required as a cofactor.

It catalyses the reaction 4-amino-4-deoxychorismate = 4-aminobenzoate + pyruvate + H(+). It functions in the pathway cofactor biosynthesis; tetrahydrofolate biosynthesis; 4-aminobenzoate from chorismate: step 2/2. Functionally, involved in the biosynthesis of p-aminobenzoate (PABA), a precursor of tetrahydrofolate. Converts 4-amino-4-deoxychorismate into 4-aminobenzoate (PABA) and pyruvate. The chain is Aminodeoxychorismate lyase from Bacillus subtilis (strain 168).